We begin with the raw amino-acid sequence, 55 residues long: UPF0291 protein CA_C2726 (55 aa).

It belongs to the UPF0291 family.

The protein resides in the cytoplasm. This is UPF0291 protein CA_C2726 from Clostridium acetobutylicum (strain ATCC 824 / DSM 792 / JCM 1419 / IAM 19013 / LMG 5710 / NBRC 13948 / NRRL B-527 / VKM B-1787 / 2291 / W).